The following is a 387-amino-acid chain: Cytochrome b (387 aa).

Helical transmembrane passes span 32-52 (FGSL…TLAM), 76-98 (WLVR…LHIG), 113-133 (TWAI…LGYV), and 179-199 (FFAL…MHLI). Residues histidine 82 and histidine 96 each coordinate heme b. The heme b site is built by histidine 183 and histidine 197. Histidine 202 lines the a ubiquinone pocket. Helical transmembrane passes span 226-246 (FIFK…IFVF), 290-310 (LLGV…PITD), 322-342 (LSKV…QIGA), and 349-369 (FIEF…VIVP).

It belongs to the cytochrome b family. Fungal cytochrome b-c1 complex contains 10 subunits; 3 respiratory subunits, 2 core proteins and 5 low-molecular weight proteins. Cytochrome b-c1 complex is a homodimer. Heme b is required as a cofactor.

It localises to the mitochondrion inner membrane. Its function is as follows. Component of the ubiquinol-cytochrome c reductase complex (complex III or cytochrome b-c1 complex) that is part of the mitochondrial respiratory chain. The b-c1 complex mediates electron transfer from ubiquinol to cytochrome c. Contributes to the generation of a proton gradient across the mitochondrial membrane that is then used for ATP synthesis. This is Cytochrome b (cob) from Emericella nidulans (Aspergillus nidulans).